We begin with the raw amino-acid sequence, 353 residues long: MKSRGLSVSTTNEHPDSQRLLADPLAGSESWWQQIAQWGTPLVEPISEDKVRLTFLWREPVAGADEPTYSRVYIDVNGVTDHHSTHPETLQRLGQTHVWYWQAEVESDFRGSYSFMPVTAEHCLNLPEGTPQERRQAQRNWWISLMDLAQNDPFNHTAPHSSYRGRPLSAVHLADAIPQTAWQPIDAGQQLPTDTQRLQLITWHSELLGNSRNVWIYHTHGTEDNAERPLAILLDGQYWATRQPIFGVLDNETDAGRLPASVYVLIDIIDQPHRSVELPCNQDFWQALQTELLPQVAALQPFTDQASRTVVAGQSFGWVGLAICRITLAAAFWWCAESSPVPSGGRMLIISKL.

Belongs to the Fes family.

The protein localises to the cytoplasm. It catalyses the reaction Fe(III)-enterobactin + 3 H2O + H(+) = Fe(III)-[N-(2,3-dihydroxybenzoyl)-L-serine] + 2 N-(2,3-dihydroxybenzoyl)-L-serine. The enzyme catalyses Fe(III)-enterobactin + H2O = Fe(III)-[N-(2,3-dihydroxybenzoyl)-L-serine]3 + H(+). The catalysed reaction is Fe(III)-[N-(2,3-dihydroxybenzoyl)-L-serine]3 + H2O + H(+) = Fe(III)-[N-(2,3-dihydroxybenzoyl)-L-serine]2 + N-(2,3-dihydroxybenzoyl)-L-serine. It carries out the reaction Fe(III)-[N-(2,3-dihydroxybenzoyl)-L-serine]2 + H2O + H(+) = Fe(III)-[N-(2,3-dihydroxybenzoyl)-L-serine] + N-(2,3-dihydroxybenzoyl)-L-serine. Catalyzes the hydrolysis of ferric enterobactin (Fe-Ent). Is responsible for the release of iron from ferric enterobactin. The polypeptide is Iron(III) enterobactin esterase (Yersinia enterocolitica).